The primary structure comprises 708 residues: Solute carrier family 15 member 1 (708 aa).

A helical membrane pass occupies residues 1–21 (MGMSKSHSFFGYPLSIFFIVV). Topologically, residues 22–53 (NEFCERFSYYGMRAILILYFTNFISWDDNLST) are extracellular. N50 carries N-linked (GlcNAc...) asparagine glycosylation. The helical transmembrane segment at 54 to 74 (AIYHTFVALCYLTPILGALIA) threads the bilayer. The Cytoplasmic portion of the chain corresponds to 75-82 (DSWLGKFK). The chain crosses the membrane as a helical span at residues 83–103 (TIVSLSIVYTIGQAVTSVSSI). Over 104–118 (NDLTDHNHDGTPDSL) the chain is Extracellular. A helical transmembrane segment spans residues 119–139 (PVHVVLSLIGLALIALGTGGI). Residues 140 to 161 (KPCVSAFGGDQFEEGQEKQRNR) lie on the Cytoplasmic side of the membrane. The chain crosses the membrane as a helical span at residues 162–182 (FFSIFYLAINAGSLLSTIITP). Topologically, residues 183–198 (MLRVQQCGIHSKQACY) are extracellular. The chain crosses the membrane as a helical span at residues 199-219 (PLAFGVPAALMAVALIVFVLG). The Cytoplasmic portion of the chain corresponds to 220 to 276 (SGMYKKFKPQGNIMGKVAKCIGFAIKNRFRHRSKAFPKREHWLDWAKEKYDERLISQ). The helical transmembrane segment at 277–297 (IKMVTRVMFLYIPLPMFWALF) threads the bilayer. At 298–327 (DQQGSRWTLQATTMSGKIGALEIQPDQMQT) the chain is on the extracellular side. A helical transmembrane segment spans residues 328 to 348 (VNAILIVIMVPIFDAVLYPLI). Over 349–361 (AKCGFNFTSLKKM) the chain is Cytoplasmic. A helical transmembrane segment spans residues 362–382 (AVGMVLASMAFVVAAIVQVEI). Residues 383–584 (DKTLPVFPKG…SANTVNMALQ (202 aa)) lie on the Extracellular side of the membrane. Positions 383-584 (DKTLPVFPKG…SANTVNMALQ (202 aa)) are extracellular domain (ECD). N-linked (GlcNAc...) asparagine glycans are attached at residues N404, N408, N439, N509, N514, and N562. A helical membrane pass occupies residues 585 to 605 (IPQYFLLTCGEVVFSVTGLEF). Topologically, residues 606–619 (SYSQAPSNMKSVLQ) are cytoplasmic. A helical membrane pass occupies residues 620–640 (AGWLLTVAVGNIIVLIVAGAG). The Extracellular segment spans residues 641 to 645 (QFSKQ). Residues 646-666 (WAEYILFAALLLVVCVIFAIM) traverse the membrane as a helical segment. The Cytoplasmic portion of the chain corresponds to 667–708 (ARFYTYINPAEIEAQFDEDEKKNRLEKSNPYFMSGANSQKQM).

This sequence belongs to the major facilitator superfamily. Proton-dependent oligopeptide transporter (POT/PTR) (TC 2.A.17) family. As to quaternary structure, interacts (via extracellular domain region) with trypsin. As to expression, expressed in small intestine.

The protein localises to the apical cell membrane. It catalyses the reaction a dipeptide(out) + H(+)(out) = a dipeptide(in) + H(+)(in). The enzyme catalyses an L-amino acid tripeptide(out) + H(+)(out) = an L-amino acid tripeptide(in) + H(+)(in). It carries out the reaction L-alanyl-L-lysine(out) + H(+)(out) = L-alanyl-L-lysine(in) + H(+)(in). The catalysed reaction is L-alanyl-L-proline(out) + H(+)(out) = L-alanyl-L-proline(in) + H(+)(in). It catalyses the reaction L-alanyl-L-valine(out) + H(+)(out) = L-alanyl-L-valine(in) + H(+)(in). The enzyme catalyses carnosine(out) + H(+)(out) = carnosine(in) + H(+)(in). It carries out the reaction glycyl-L-glutamine(out) + H(+)(out) = glycyl-L-glutamine(in) + H(+)(in). The catalysed reaction is glycyl-L-leucine(out) + H(+)(out) = glycyl-L-leucine(in) + H(+)(in). It catalyses the reaction glycyl-L-proline(out) + H(+)(out) = glycyl-L-proline(in) + H(+)(in). The enzyme catalyses glycyl-sarcosine(out) + H(+)(out) = glycyl-sarcosine(in) + H(+)(in). It carries out the reaction L-leucyl-L-leucine(out) + H(+)(out) = L-leucyl-L-leucine(in) + H(+)(in). The catalysed reaction is L-leucyl-L-proline(out) + H(+)(out) = L-leucyl-L-proline(in) + H(+)(in). It catalyses the reaction L-phenylalanyl-L-leucine(out) + H(+)(out) = L-phenylalanyl-L-leucine(in) + H(+)(in). The enzyme catalyses L-phenylalanyl-L-phenylalanine(out) + H(+)(out) = L-phenylalanyl-L-phenylalanine(in) + H(+)(in). It carries out the reaction L-lysyl-glycine(out) + H(+)(out) = L-lysyl-glycine(in) + H(+)(in). The catalysed reaction is L-tyrosylglycine(out) + H(+)(out) = L-tyrosylglycine(in) + H(+)(in). It catalyses the reaction L-alanyl-L-aspartate(out) + 2 H(+)(out) = L-alanyl-L-aspartate(in) + 2 H(+)(in). The enzyme catalyses L-aspartyl-glycine(out) + 2 H(+)(out) = L-aspartyl-glycine(in) + 2 H(+)(in). It carries out the reaction glycyl-L-aspartate(out) + 2 H(+)(out) = glycyl-L-aspartate(in) + 2 H(+)(in). The catalysed reaction is glycyl-L-glutamate(out) + 2 H(+)(out) = glycyl-L-glutamate(in) + 2 H(+)(in). It catalyses the reaction L-alanyl-L-leucyl-L-alanine(out) + H(+)(out) = L-alanyl-L-leucyl-L-alanine(in) + H(+)(in). The enzyme catalyses L-alanyl-L-prolylglycine(out) + H(+)(out) = L-alanyl-L-prolylglycine(in) + H(+)(in). It carries out the reaction glycylglycyl-L-isoleucine(out) + H(+)(out) = glycylglycyl-L-isoleucine(in) + H(+)(in). The catalysed reaction is glycylglycyl-L-proline(out) + H(+)(out) = glycylglycyl-L-proline(in) + H(+)(in). It catalyses the reaction L-methionyl-L-phenylalanyl-L-methionine(out) + H(+)(out) = L-methionyl-L-phenylalanyl-L-methionine(in) + H(+)(in). The enzyme catalyses N-acetyl-D-muramoyl-L-alanyl-D-isoglutamine(out) + 2 H(+)(out) = N-acetyl-D-muramoyl-L-alanyl-D-isoglutamine(in) + 2 H(+)(in). It carries out the reaction N(alpha)-formyl-L-methionyl-L-leucyl-L-phenylalanine(out) + 2 H(+)(out) = N(alpha)-formyl-L-methionyl-L-leucyl-L-phenylalanine(in) + 2 H(+)(in). Electrogenic proton-coupled amino-acid transporter that transports oligopeptides of 2 to 4 amino acids with a preference for dipeptides. Transports neutral and monovalently charged peptides with a proton to peptide stoichiometry of 1:1 or 2:1. Primarily responsible for the absorption of dietary di- and tripeptides from the small intestinal lumen. Mediates transepithelial transport of muramyl and N-formylated bacterial dipeptides contributing to recognition of pathogenic bacteria by the mucosal immune system. This chain is Solute carrier family 15 member 1, found in Homo sapiens (Human).